Consider the following 222-residue polypeptide: MIF4G domain-containing protein B (222 aa).

In terms of domain architecture, MIF4G spans 3-205; it reads NSSKEDYKIQ…LEILEFRAGG (203 aa).

It belongs to the MIF4GD family. In terms of assembly, interacts with eif4g1, eif4g2 and slbp; probably tethered by SLBP to the 3'-end of mRNAs ending with the histone stem-loop, it also interacts with eif4g1 which is bound to their 5'-end.

It is found in the cytoplasm. The protein resides in the nucleus. Its function is as follows. Functions in replication-dependent translation of histone mRNAs which differ from other eukaryotic mRNAs in that they do not end with a poly-A tail but a stem-loop. May participate in circularizing those mRNAs specifically enhancing their translation. In Danio rerio (Zebrafish), this protein is MIF4G domain-containing protein B (mif4gdb).